The chain runs to 194 residues: Large ribosomal subunit protein uL24c (194 aa).

Residues 1–50 (MVAMAMASLQSSMSSLSLSSNSFLGQPLSPITLSPFLQGKPTEKKCLIVM) constitute a chloroplast transit peptide.

It belongs to the universal ribosomal protein uL24 family. Part of the 50S ribosomal subunit.

The protein localises to the plastid. Its subcellular location is the chloroplast. Its function is as follows. One of two assembly initiator proteins, it binds directly to the 5'-end of the 23S rRNA, where it nucleates assembly of the 50S subunit. The sequence is that of Large ribosomal subunit protein uL24c (RPL24) from Pisum sativum (Garden pea).